Here is a 159-residue protein sequence, read N- to C-terminus: C-type lectin BJcuL (159 aa).

The N-terminal stretch at 1–24 (MGRFLFVASSACWFVFLSLSGAKG) is a signal peptide. Cystine bridges form between C27/C38, C55/C155, C62/C157, and C130/C147. Residues 34-156 (MNGLCYKIFN…CESKNAFLCQ (123 aa)) form the C-type lectin domain. Residues Q120, D122, E128, N143, and D144 each coordinate Ca(2+). The Galactose-binding motif lies at 120–122 (QPD).

This sequence belongs to the true venom lectin family. As to quaternary structure, homodecamer of disulfide-linked dimers arranged in two 5-fold symmetric pentamers. Binds the gentamicin group of aminoglycoside antibiotics at the dimeric interface near the intermolecular disulfide bond. As to expression, expressed by the venom gland.

Its subcellular location is the secreted. Its activity is regulated as follows. Hemagglutination activity is inhibited by lactose (MIC=2.5 mM), galactose (MIC=10 mM), and raffinose. Is very weakly or not inhibited by gentamicin, kanamycin, glucose and sucrose. Functionally, galactose-binding lectin which recognizes specific carbohydrate structures and agglutinates a variety of animal cells by binding to cell-surface glycoproteins and glycolipids. Calcium-dependent lectin. Also binds lactose and raffinose. Shows high hemagglutinating activity on mammalian erythrocytes. It also involved in immunological functions, since it is able of inducing potent neutrophil activation. In vivo, it causes edema and increases vascular permeability after injection into mouse hind paws (10-100 ug/paw). In anesthetized rats, it decreases the blood pressure by approximately 15%, with a rapid return to the resting level. Is an effective inhibitor of cell growth in some cancer cell lines, especially against renal and pancreatic cancer cell lines, human breast and ovarian carcinoma, glioblastoma and a bovine brain microvascular endothelial cell line. The sequence is that of C-type lectin BJcuL from Bothrops jararacussu (Jararacussu).